Consider the following 205-residue polypeptide: uncharacterized protein (205 aa).

Helical transmembrane passes span Leu4 to Asp24, Lys105 to Leu125, Phe130 to Asn150, Trp151 to Cys171, and Ile182 to Ile202.

Its subcellular location is the cell membrane. This is an uncharacterized protein from Methanocaldococcus jannaschii (strain ATCC 43067 / DSM 2661 / JAL-1 / JCM 10045 / NBRC 100440) (Methanococcus jannaschii).